Reading from the N-terminus, the 91-residue chain is uncharacterized protein (91 aa).

Helical transmembrane passes span Ala-6–Phe-26, Met-37–Ile-57, and Ile-68–Leu-88.

Its subcellular location is the cell membrane. This is an uncharacterized protein from Bacillus subtilis (strain 168).